A 355-amino-acid polypeptide reads, in one-letter code: U5 small nuclear ribonucleoprotein 40 kDa protein (355 aa).

7 WD repeats span residues 60–99, 103–142, 145–185, 187–226, 230–269, 280–319, and 322–355; these read GHKGEIYSCKFNSYGTALASGGSDKEIFLWNVYGECINYS, GHKGTILELHWSTDSNEIYTACTDKSIGVWDSNKGELIKR, EHSG…STHL, QHKYPVTSVCFSDASDQLITGGIDNVIRVWDIRNQEDPLY, SHQDTITSTSVSKDGAYLLSNSMDNSCKIWDIRPYAPPNR, NFEKNLIKSSWSIDGRRIGCGSSDRQVYIWDTNTKQLQYC, and GHSGTVNEVTFHPNEPIIASCSSDKTIYLGEIKP.

As to quaternary structure, component of the pre-catalytic and catalytic spliceosome complexes. Component of the postcatalytic spliceosome P complex. Part of the U5 snRNP complex. Component of the U4/U6-U5 tri-snRNP complex.

It localises to the nucleus. Its function is as follows. Required for pre-mRNA splicing as component of the activated spliceosome. Component of the U5 small nuclear ribonucleoprotein (snRNP) complex and the U4/U6-U5 tri-snRNP complex, building blocks of the spliceosome. The protein is U5 small nuclear ribonucleoprotein 40 kDa protein (snrnp40) of Dictyostelium discoideum (Social amoeba).